A 130-amino-acid chain; its full sequence is Small ribosomal subunit protein uS8 (130 aa).

Belongs to the universal ribosomal protein uS8 family. As to quaternary structure, part of the 30S ribosomal subunit. Contacts proteins S5 and S12.

Functionally, one of the primary rRNA binding proteins, it binds directly to 16S rRNA central domain where it helps coordinate assembly of the platform of the 30S subunit. The protein is Small ribosomal subunit protein uS8 of Opitutus terrae (strain DSM 11246 / JCM 15787 / PB90-1).